The sequence spans 631 residues: DNA mismatch repair protein MutL (631 aa).

2 disordered regions span residues 337 to 362 (PHSP…ELQS) and 400 to 429 (AVQS…RAEL).

This sequence belongs to the DNA mismatch repair MutL/HexB family.

In terms of biological role, this protein is involved in the repair of mismatches in DNA. It is required for dam-dependent methyl-directed DNA mismatch repair. May act as a 'molecular matchmaker', a protein that promotes the formation of a stable complex between two or more DNA-binding proteins in an ATP-dependent manner without itself being part of a final effector complex. The polypeptide is DNA mismatch repair protein MutL (Shewanella oneidensis (strain ATCC 700550 / JCM 31522 / CIP 106686 / LMG 19005 / NCIMB 14063 / MR-1)).